Consider the following 594-residue polypeptide: CDPK-related kinase 4 (594 aa).

Residues 1–131 (MGHCYSRNIS…DSGGGERLDK (131 aa)) form a disordered region. Gly2 carries the N-myristoyl glycine lipid modification. A compositionally biased stretch (polar residues) spans 37 to 58 (IPQSPVASGTPEVNSYNISPFQ). Residues 116-131 (VVDHGGDSGGGERLDK) are compositionally biased toward basic and acidic residues. The Protein kinase domain occupies 143-405 (YELGKEVGRG…AAQALAHPWL (263 aa)). ATP is bound by residues 149–157 (VGRGHFGHT) and Lys175. The active-site Proton acceptor is the Asp271. The residue at position 311 (Ser311) is a Phosphoserine. The interval 409 to 439 (NPGLLLDFSVYKLVKSYIRASPFRRSALKAL) is autoinhibitory domain. The calmodulin binding (CaMBD) stretch occupies residues 428–448 (ASPFRRSALKALSKAIPDEEL). EF-hand domains follow at residues 446-481 (EELVFLKAQFMLLDPKDGGLSLNCFTMALTRYATDA), 482-517 (MMESRLPDILNTMQPLAQKKLDFEEFCAAAVSVYQL), 518-557 (EALEEWEQIATSAFEHFEHEGNRIISVQELAGEMSVGPSA), and 558-587 (YPLLKDWIRSSDGKLSFLGYAKFLHGVTVR). Asp462, Lys501, Glu506, Asn539, Glu546, Ser567, Asp569, and Lys571 together coordinate Ca(2+). Ser573 is subject to Phosphoserine.

The protein belongs to the protein kinase superfamily. Ser/Thr protein kinase family. CDPK subfamily. In terms of assembly, binds calmodulin (CaM) in a calcium-dependent manner. In terms of processing, autophosphorylated.

Its subcellular location is the cell membrane. The enzyme catalyses L-seryl-[protein] + ATP = O-phospho-L-seryl-[protein] + ADP + H(+). It catalyses the reaction L-threonyl-[protein] + ATP = O-phospho-L-threonyl-[protein] + ADP + H(+). Its activity is regulated as follows. Activated by calcium and calmodulin. Autophosphorylation may play an important role in the regulation of the kinase activity. In terms of biological role, may play a role in signal transduction pathways that involve calcium as a second messenger. The polypeptide is CDPK-related kinase 4 (CRK4) (Arabidopsis thaliana (Mouse-ear cress)).